The primary structure comprises 114 residues: T cell receptor beta variable 6-5 (114 aa).

A signal peptide spans 1–21 (MSIGLLCCAALSLLWAGPVNA). The Ig-like domain occupies 22–114 (GVTQTPKFQV…TSVYFCASSY (93 aa)). A disulfide bridge connects residues Cys42 and Cys110. A glycan (N-linked (GlcNAc...) asparagine) is linked at Asn84.

In terms of assembly, alpha-beta TR is a heterodimer composed of an alpha and beta chain; disulfide-linked. The alpha-beta TR is associated with the transmembrane signaling CD3 coreceptor proteins to form the TR-CD3 (TcR or TCR). The assembly of alpha-beta TR heterodimers with CD3 occurs in the endoplasmic reticulum where a single alpha-beta TR heterodimer associates with one CD3D-CD3E heterodimer, one CD3G-CD3E heterodimer and one CD247 homodimer forming a stable octameric structure. CD3D-CD3E and CD3G-CD3E heterodimers preferentially associate with TR alpha and TR beta chains, respectively. The association of the CD247 homodimer is the last step of TcR assembly in the endoplasmic reticulum and is required for transport to the cell surface.

Its subcellular location is the cell membrane. In terms of biological role, v region of the variable domain of T cell receptor (TR) beta chain that participates in the antigen recognition. Alpha-beta T cell receptors are antigen specific receptors which are essential to the immune response and are present on the cell surface of T lymphocytes. Recognize peptide-major histocompatibility (MH) (pMH) complexes that are displayed by antigen presenting cells (APC), a prerequisite for efficient T cell adaptive immunity against pathogens. Binding of alpha-beta TR to pMH complex initiates TR-CD3 clustering on the cell surface and intracellular activation of LCK that phosphorylates the ITAM motifs of CD3G, CD3D, CD3E and CD247 enabling the recruitment of ZAP70. In turn ZAP70 phosphorylates LAT, which recruits numerous signaling molecules to form the LAT signalosome. The LAT signalosome propagates signal branching to three major signaling pathways, the calcium, the mitogen-activated protein kinase (MAPK) kinase and the nuclear factor NF-kappa-B (NF-kB) pathways, leading to the mobilization of transcription factors that are critical for gene expression and essential for T cell growth and differentiation. The T cell repertoire is generated in the thymus, by V-(D)-J rearrangement. This repertoire is then shaped by intrathymic selection events to generate a peripheral T cell pool of self-MH restricted, non-autoaggressive T cells. Post-thymic interaction of alpha-beta TR with the pMH complexes shapes TR structural and functional avidity. This chain is T cell receptor beta variable 6-5, found in Homo sapiens (Human).